The following is a 238-amino-acid chain: MFEFVKLKNVCVNLSHRSILTDISLSLISNRVLTLIGPNGAGKSTLVRIILGLIKPNSGTIIRSNNLSVGYVPQKLHLNTLLPITVERFMKLSRKTNNIKIEEMLKRVKAESLKFCQLQKLSGGEMQRILFAKALLNNPNLLVLDEPTQGVDVMGQLALYKLINEIRHELQCAILIVSHDLNFVMAKTDDVICLNNHICCSGTPETVCNNLEFISIFGLKRVQELAIYHHNHNHIHNF.

The ABC transporter domain occupies 5–220 (VKLKNVCVNL…LEFISIFGLK (216 aa)). 37-44 (GPNGAGKS) provides a ligand contact to ATP.

The protein belongs to the ABC transporter superfamily. Zinc importer (TC 3.A.1.15.5) family. As to quaternary structure, the complex is composed of two ATP-binding proteins (ZnuC), two transmembrane proteins (ZnuB) and a solute-binding protein (ZnuA).

The protein resides in the cell inner membrane. It catalyses the reaction Zn(2+)(out) + ATP(in) + H2O(in) = Zn(2+)(in) + ADP(in) + phosphate(in) + H(+)(in). Functionally, part of the ABC transporter complex ZnuABC involved in zinc import. Responsible for energy coupling to the transport system. This is Zinc import ATP-binding protein ZnuC from Buchnera aphidicola subsp. Acyrthosiphon pisum (strain APS) (Acyrthosiphon pisum symbiotic bacterium).